The following is a 429-amino-acid chain: Glutamate-1-semialdehyde 2,1-aminomutase (429 aa).

K264 is modified (N6-(pyridoxal phosphate)lysine).

The protein belongs to the class-III pyridoxal-phosphate-dependent aminotransferase family. HemL subfamily. As to quaternary structure, homodimer. Pyridoxal 5'-phosphate is required as a cofactor.

It is found in the cytoplasm. It catalyses the reaction (S)-4-amino-5-oxopentanoate = 5-aminolevulinate. It functions in the pathway porphyrin-containing compound metabolism; protoporphyrin-IX biosynthesis; 5-aminolevulinate from L-glutamyl-tRNA(Glu): step 2/2. The polypeptide is Glutamate-1-semialdehyde 2,1-aminomutase (Campylobacter curvus (strain 525.92)).